The following is a 159-amino-acid chain: MRITGQPHVYKKDTIIRLKPLSLNSNNRSYVFSSSKGNIQNIINHLNNLNEIVGRSLLGIWKINSYFGLSKDPSESKSKNPSVFNTAKTIFKSGGVDYSSQLKEIKSLLEAQNTRIKNLEKAIQSLDNKIEPEPLTKKEVKELKESINSIKEGLKNIIG.

The protein belongs to the caulimoviridae ORF II family.

Functionally, this protein is involved in virus transmission. In Cauliflower mosaic virus (strain BBC) (CaMV), this protein is Aphid transmission protein.